The sequence spans 82 residues: Defensin-like protein 75 (82 aa).

The first 26 residues, 1–26, serve as a signal peptide directing secretion; the sequence is MAKIKSLDVITVAIILLLVIADQATA. 4 disulfides stabilise this stretch: C33–C66, C37–C55, C41–C64, and C45–C65.

The protein belongs to the DEFL family.

The protein localises to the secreted. The sequence is that of Defensin-like protein 75 (LCR45) from Arabidopsis thaliana (Mouse-ear cress).